A 458-amino-acid polypeptide reads, in one-letter code: UDP-N-acetylmuramate--L-alanine ligase (458 aa).

Residue 118-124 (GTHGKTT) coordinates ATP.

This sequence belongs to the MurCDEF family.

It localises to the cytoplasm. It catalyses the reaction UDP-N-acetyl-alpha-D-muramate + L-alanine + ATP = UDP-N-acetyl-alpha-D-muramoyl-L-alanine + ADP + phosphate + H(+). The protein operates within cell wall biogenesis; peptidoglycan biosynthesis. Functionally, cell wall formation. In Clostridium botulinum (strain Okra / Type B1), this protein is UDP-N-acetylmuramate--L-alanine ligase.